The primary structure comprises 229 residues: Putative ABC transporter permease protein ORF1 (229 aa).

Positions 23 to 214 (ALNSLLVALA…LPSLAFFALV (192 aa)) constitute an ABC transmembrane type-1 domain. 5 helical membrane-spanning segments follow: residues 27-47 (LLVALATAAVTVLIATPMAYV), 62-82 (WVVVSQAFPFVLLIIPLFLVL), 91-111 (LTGLVLVYVVWSLPFALWMLA), 150-170 (ATALFAFVTAWNEFFFALVLL), and 194-214 (SPAGAAAFLATLPSLAFFALV).

This sequence belongs to the binding-protein-dependent transport system permease family. MalFG subfamily.

The protein resides in the cell membrane. May participate in oleandomycin secretion during antibiotic production. The protein is Putative ABC transporter permease protein ORF1 of Streptomyces antibioticus.